The sequence spans 94 residues: C-C motif chemokine 17 (94 aa).

An N-terminal signal peptide occupies residues 1–23 (MAPLKMLALVTLLLGASLQHIHA). Intrachain disulfides connect cysteine 33/cysteine 57 and cysteine 34/cysteine 73.

This sequence belongs to the intercrine beta (chemokine CC) family. Constitutively expressed in thymus. Detected at lower levels in the lung, colon and small intestine. Expressed in stimulated peripheral blood mononuclear cells, but not in resting cells.

It localises to the secreted. Functionally, chemokine, which displays chemotactic activity for T lymphocytes, preferentially Th2 cells, but not monocytes or granulocytes. Therefore plays an important role in a wide range of inflammatory and immunological processes. Acts by binding to CCR4 at T-cell surface. Mediates GM-CSF/CSF2-driven pain and inflammation. In the brain, required to maintain the typical, highly branched morphology of hippocampal microglia under homeostatic conditions. May be important for the appropriate adaptation of microglial morphology and synaptic plasticity to acute lipopolysaccharide (LPS)-induced neuroinflammation. Plays a role in wound healing, mainly by inducing fibroblast migration into the wound. The sequence is that of C-C motif chemokine 17 (CCL17) from Homo sapiens (Human).